The following is a 575-amino-acid chain: UvrABC system protein C (575 aa).

Residues 15–90 (AEPGVYQFEA…IKRHQPRYNV (76 aa)) enclose the GIY-YIG domain. Residues 198–233 (GVLAEPLRREMETAAASQAFERAASLRDRLEAVETF) form the UVR domain.

Belongs to the UvrC family. In terms of assembly, interacts with UvrB in an incision complex.

It localises to the cytoplasm. In terms of biological role, the UvrABC repair system catalyzes the recognition and processing of DNA lesions. UvrC both incises the 5' and 3' sides of the lesion. The N-terminal half is responsible for the 3' incision and the C-terminal half is responsible for the 5' incision. This is UvrABC system protein C from Natronomonas pharaonis (strain ATCC 35678 / DSM 2160 / CIP 103997 / JCM 8858 / NBRC 14720 / NCIMB 2260 / Gabara) (Halobacterium pharaonis).